The sequence spans 278 residues: MAIRFYRDYTPGARDRLVVSSSEGTVRFKPQKKLISGFTCRKGRNNRGIITSRHRGGGHKRLYRQIDFRRSKRGISGRIVTVEYDPNRNAYICLVHYEDGEKKYILHPGGIKIGDTIISGPMATILIGNALPLTNMPLGTTIHNVEITPGRGGQLARAAGTAAKLIAKEGRLATSRLPSGEVRLISQNCLATVGQVGNVDDNNRTLGKAGSKRWLGKRPKVRGVVMNPVDHPHGGGEGRAPIGRKKPLTPWGHTALGGRSRKNHKYSDTLILRRRRNS.

Positions 224 to 267 (VVMNPVDHPHGGGEGRAPIGRKKPLTPWGHTALGGRSRKNHKYS) are disordered.

The protein belongs to the universal ribosomal protein uL2 family. Part of the 50S ribosomal subunit.

The protein localises to the plastid. It localises to the chloroplast. The polypeptide is Large ribosomal subunit protein uL2c (rpl2) (Huperzia lucidula (Shining clubmoss)).